A 293-amino-acid chain; its full sequence is Ethanolamine ammonia-lyase small subunit (293 aa).

Residues V207 and E228 each contribute to the adenosylcob(III)alamin site.

Belongs to the EutC family. As to quaternary structure, the basic unit is a heterodimer which dimerizes to form tetramers. The heterotetramers trimerize; 6 large subunits form a core ring with 6 small subunits projecting outwards. Adenosylcob(III)alamin is required as a cofactor.

It localises to the bacterial microcompartment. The catalysed reaction is ethanolamine = acetaldehyde + NH4(+). Its pathway is amine and polyamine degradation; ethanolamine degradation. Catalyzes the deamination of various vicinal amino-alcohols to oxo compounds. Allows this organism to utilize ethanolamine as the sole source of nitrogen and carbon in the presence of external vitamin B12. This Listeria monocytogenes serotype 4b (strain CLIP80459) protein is Ethanolamine ammonia-lyase small subunit.